A 207-amino-acid chain; its full sequence is ATP phosphoribosyltransferase (207 aa).

Belongs to the ATP phosphoribosyltransferase family. Short subfamily. Heteromultimer composed of HisG and HisZ subunits.

Its subcellular location is the cytoplasm. It carries out the reaction 1-(5-phospho-beta-D-ribosyl)-ATP + diphosphate = 5-phospho-alpha-D-ribose 1-diphosphate + ATP. It participates in amino-acid biosynthesis; L-histidine biosynthesis; L-histidine from 5-phospho-alpha-D-ribose 1-diphosphate: step 1/9. Its function is as follows. Catalyzes the condensation of ATP and 5-phosphoribose 1-diphosphate to form N'-(5'-phosphoribosyl)-ATP (PR-ATP). Has a crucial role in the pathway because the rate of histidine biosynthesis seems to be controlled primarily by regulation of HisG enzymatic activity. The chain is ATP phosphoribosyltransferase from Geobacillus kaustophilus (strain HTA426).